Reading from the N-terminus, the 295-residue chain is MNPGDAQSIDRRCVRRSFDASAERYDEVAVLQREVADRLLERLEPVRVHPRRVLDLGAGTGYATRGLLRRYRKAEVHAVDLAPAMLQRVRRRAPWLRRPRCVCADLHALPYPDDSFELVFSNLALQWAEDLPTALRELQRVTAPEGAVMFATFGPETLHELRGAWAEVGDQARVHRFADKHDVGDRMLEAGFVDPVLDGESFTLTYAQPREVMRDLKALGASNADPGRPRGLLSPHRLARVEAAYRLAWRQPDGRVPATYEVVYGHAWGMGGTPQRADDTGEVRLDVHGIRRRRR.

Belongs to the methyltransferase superfamily.

The catalysed reaction is malonyl-[ACP] + S-adenosyl-L-methionine = malonyl-[ACP] methyl ester + S-adenosyl-L-homocysteine. It functions in the pathway cofactor biosynthesis; biotin biosynthesis. In terms of biological role, converts the free carboxyl group of a malonyl-thioester to its methyl ester by transfer of a methyl group from S-adenosyl-L-methionine (SAM). It allows to synthesize pimeloyl-ACP via the fatty acid synthetic pathway. The polypeptide is Malonyl-[acyl-carrier protein] O-methyltransferase (Halorhodospira halophila (strain DSM 244 / SL1) (Ectothiorhodospira halophila (strain DSM 244 / SL1))).